A 956-amino-acid polypeptide reads, in one-letter code: Zinc fingers and homeoboxes protein 3 (956 aa).

Residues 1–107 (MASKRKSTTP…SEHTDFNKDP (107 aa)) form a required for nuclear localization region. The interval 22–66 (DASMEAQPAETLPEGPQQDLPPEASAASSEAAQNPSSTDGSTLAN) is disordered. The segment covering 42–58 (PPEASAASSEAAQNPSS) has biased composition (low complexity). 2 C2H2-type zinc fingers span residues 77–100 (YSCK…NSEH) and 109–132 (FVCS…ATCH). The segment at 242–488 (ASASSAKNPH…LLTACPSITS (247 aa)) is required for homodimerization and interaction with NFYA. Positions 303–502 (LSSIPTYNAA…DASIYKNKKS (200 aa)) are required for repressor activity. DNA-binding regions (homeobox) lie at residues 304-363 (SSIP…GISW) and 494-553 (ASIY…RNLK). Residues 497-555 (YKNKKSHEQLSALKGSFCRNQFPGQSEVEHLTKVTGLSTREVRKWFSDRRYHCRNLKGS) form a required for nuclear localization region. Disordered stretches follow at residues 598-618 (PSAK…KYKE) and 666-695 (KVNA…GEED). A phosphoserine mark is found at Ser599 and Ser604. The homeobox 3 DNA-binding region spans 612 to 671 (TPTKYKERAPEQLRALESSFAQNPLPLDEELDRLRSETKMTRREIDSWFSERRKKVNAEE). Residues 666 to 677 (KVNAEETKKAEE) show a composition bias toward basic and acidic residues. A compositionally biased stretch (acidic residues) spans 679–695 (ASQEEEEAAEDEGGEED). Phosphoserine occurs at positions 680, 708, and 723. DNA-binding regions (homeobox) lie at residues 764–823 (PGKV…KNGQ) and 835–894 (FPPG…TRAV). The segment at 890–956 (ETRAVADTGS…PQAGRQLETD (67 aa)) is disordered. Phosphoserine is present on residues Ser927 and Ser946.

It belongs to the ZHX family. As to quaternary structure, homodimer (via homeobox domain 1). Heterodimer with ZHX1 (via homeobox domain 1). Heterodimer with ZHX2 (via homeobox domain 1). Heterodimerization with ZHX1 is a prerequisite for repressor activity. Interacts with NFYA. In terms of tissue distribution, widely expressed. High expression in kidney. Expressed during osteogenic differentiation.

The protein localises to the nucleus. Its function is as follows. Acts as a transcriptional repressor. Involved in the early stages of mesenchymal stem cell (MSC) osteogenic differentiation. Is a regulator of podocyte gene expression during primary glomerula disease. Binds to promoter DNA. This Homo sapiens (Human) protein is Zinc fingers and homeoboxes protein 3 (ZHX3).